The primary structure comprises 514 residues: 23S rRNA (uracil(1939)-C(5))-methyltransferase RlmD (514 aa).

[4Fe-4S] cluster-binding residues include C70, C76, C79, and C158. Residues Q272, F301, N306, E322, N350, and D371 each contribute to the S-adenosyl-L-methionine site. C398 functions as the Nucleophile in the catalytic mechanism.

It belongs to the class I-like SAM-binding methyltransferase superfamily. RNA M5U methyltransferase family. RlmD subfamily.

It catalyses the reaction uridine(1939) in 23S rRNA + S-adenosyl-L-methionine = 5-methyluridine(1939) in 23S rRNA + S-adenosyl-L-homocysteine + H(+). In terms of biological role, catalyzes the formation of 5-methyl-uridine at position 1939 (m5U1939) in 23S rRNA. The polypeptide is 23S rRNA (uracil(1939)-C(5))-methyltransferase RlmD (Chromobacterium violaceum (strain ATCC 12472 / DSM 30191 / JCM 1249 / CCUG 213 / NBRC 12614 / NCIMB 9131 / NCTC 9757 / MK)).